An 88-amino-acid polypeptide reads, in one-letter code: HssA/B-like protein 17 (88 aa).

This sequence belongs to the hssA/B family.

The chain is HssA/B-like protein 17 (hssl17) from Dictyostelium discoideum (Social amoeba).